We begin with the raw amino-acid sequence, 221 residues long: Ktr system potassium uptake protein C (221 aa).

Residues 2-118 (KKEFAVIGLG…LSKIGADHIV (117 aa)) enclose the RCK N-terminal domain. Residues Arg12, 32-34 (DID), 52-53 (DS), 74-76 (IGE), 99-101 (KAQ), His105, and Glu121 each bind NAD(+). Positions 135-219 (NNVLDYLELS…ISRFEKRVLH (85 aa)) constitute an RCK C-terminal domain.

The protein belongs to the KtrA potassium transport family. Homodimer, tetramer (dimer of homodimer) and octamer (tetramer of homodimer). Part of the KtrCD complex formed by an octameric catalytic ring of KtrC and a membrane associated dimer of KtrD forming a potassium channel.

It is found in the cell membrane. In terms of biological role, catalytic subunit of the KtrCD potassium uptake transporter. The 2 major potassium transporter complexes KtrAB and KtrCD confer resistance to both suddenly imposed and prolonged osmotic stress. The chain is Ktr system potassium uptake protein C (ktrC) from Bacillus subtilis (strain 168).